The chain runs to 224 residues: 7-cyano-7-deazaguanine synthase (224 aa).

Residue 12-22 coordinates ATP; it reads LSGGLDSSTVT. 4 residues coordinate Zn(2+): cysteine 193, cysteine 201, cysteine 204, and cysteine 207.

Belongs to the QueC family. It depends on Zn(2+) as a cofactor.

The enzyme catalyses 7-carboxy-7-deazaguanine + NH4(+) + ATP = 7-cyano-7-deazaguanine + ADP + phosphate + H2O + H(+). It functions in the pathway purine metabolism; 7-cyano-7-deazaguanine biosynthesis. Catalyzes the ATP-dependent conversion of 7-carboxy-7-deazaguanine (CDG) to 7-cyano-7-deazaguanine (preQ(0)). This is 7-cyano-7-deazaguanine synthase from Prochlorococcus marinus (strain MIT 9215).